Here is a 181-residue protein sequence, read N- to C-terminus: Ribulose bisphosphate carboxylase small subunit, chloroplastic 1 (181 aa).

Residues 1–57 (MASSIVSSAAAATRSNVAQASMVAPFTGLKSAASFPVTKKNNNVDITSLASNGGRVR) constitute a chloroplast transit peptide.

This sequence belongs to the RuBisCO small chain family. (Microbial infection) Binds to tobamovirus movement protein; this interaction seems required for viral systemic movement. In terms of assembly, heterohexadecamer of 8 large and 8 small subunits.

Its subcellular location is the plastid. The protein localises to the chloroplast. The protein resides in the cell junction. It is found in the plasmodesma. In terms of biological role, ruBisCO catalyzes two reactions: the carboxylation of D-ribulose 1,5-bisphosphate, the primary event in carbon dioxide fixation, as well as the oxidative fragmentation of the pentose substrate. Both reactions occur simultaneously and in competition at the same active site. Although the small subunit is not catalytic it is essential for maximal activity. Involved in antiviral defenses. The sequence is that of Ribulose bisphosphate carboxylase small subunit, chloroplastic 1 from Solanum lycopersicum (Tomato).